The sequence spans 636 residues: Chaperone protein DnaK (636 aa).

Thr-196 is subject to Phosphothreonine; by autocatalysis. The segment at 591–636 (LAEAMYKSSSQPGAQEAPPTDGQPKPDEKGKDNVVDAEFVDVDDKK) is disordered. Positions 614-624 (PKPDEKGKDNV) are enriched in basic and acidic residues.

It belongs to the heat shock protein 70 family.

In terms of biological role, acts as a chaperone. In Solibacter usitatus (strain Ellin6076), this protein is Chaperone protein DnaK.